Consider the following 810-residue polypeptide: Leucine--tRNA ligase (810 aa).

The 'HIGH' region signature appears at 43-53 (PYPSGTLHIGH). The 'KMSKS' region signature appears at 578-582 (KMSKS). Residue Lys581 coordinates ATP.

It belongs to the class-I aminoacyl-tRNA synthetase family.

Its subcellular location is the cytoplasm. The enzyme catalyses tRNA(Leu) + L-leucine + ATP = L-leucyl-tRNA(Leu) + AMP + diphosphate. The polypeptide is Leucine--tRNA ligase (Solibacter usitatus (strain Ellin6076)).